Consider the following 356-residue polypeptide: Probable neutral protease 2 homolog TRV_06370 (356 aa).

Residues 1–17 (MQFTALLAALGAPLALA) form the signal peptide. Residues 18-183 (ASIPAAAHNH…DDSTGVIDKR (166 aa)) constitute a propeptide that is removed on maturation. 2 cysteine pairs are disulfide-bonded: Cys191–Cys262 and Cys269–Cys287. A Zn(2+)-binding site is contributed by His311. The active site involves Glu312. Zn(2+) is bound by residues His315 and Asp326.

The protein belongs to the peptidase M35 family. Zn(2+) serves as cofactor.

The protein localises to the secreted. The catalysed reaction is Preferential cleavage of bonds with hydrophobic residues in P1'. Also 3-Asn-|-Gln-4 and 8-Gly-|-Ser-9 bonds in insulin B chain.. Its function is as follows. Probable secreted metalloprotease that shows high activities on basic nuclear substrates such as histone and protamine. May be involved in virulence. This Trichophyton verrucosum (strain HKI 0517) protein is Probable neutral protease 2 homolog TRV_06370.